A 366-amino-acid chain; its full sequence is MISSFHRPTVARVNLQAIKENVASVQKHIPLGVKTYAVVKADAYGHGAVQVSKALLPQVDGYCVSNLDEALQLRQAGIDKEILILGVLLPNELELAVANAITVTIASLDWIALARLEKKECQGLKVHVKVDSGMGRIGLRSSKEVNLLIDSLKELGADVEGIFTHFATADEADDTKFNQQLQFFKKLIAGLEDKPRLVHASNSATSIWHSDTIFNAVRLGIVSYGLNPSGSDLSLPFPLQEALSLESSLVHVKMISAGDTVGYGATYTAKKSEYVGTVPIGYADGWTRNMQGFSVLVDGQFCEIIGRVSMDQLTIRLSKAYPLGTKVTLIGSNQQKNISTTDIANYRNTINYEVLCLLSDRIPRIY.

The active-site Proton acceptor; specific for D-alanine is K40. K40 carries the N6-(pyridoxal phosphate)lysine modification. R136 serves as a coordination point for substrate. Catalysis depends on Y263, which acts as the Proton acceptor; specific for L-alanine. M310 contributes to the substrate binding site.

It belongs to the alanine racemase family. The cofactor is pyridoxal 5'-phosphate.

It catalyses the reaction L-alanine = D-alanine. It functions in the pathway amino-acid biosynthesis; D-alanine biosynthesis; D-alanine from L-alanine: step 1/1. Catalyzes the interconversion of L-alanine and D-alanine. May also act on other amino acids. The polypeptide is Alanine racemase (alr) (Streptococcus pyogenes serotype M5 (strain Manfredo)).